An 88-amino-acid chain; its full sequence is Small ribosomal subunit protein uS17 (88 aa).

The protein belongs to the universal ribosomal protein uS17 family. In terms of assembly, part of the 30S ribosomal subunit.

In terms of biological role, one of the primary rRNA binding proteins, it binds specifically to the 5'-end of 16S ribosomal RNA. In Oenococcus oeni (strain ATCC BAA-331 / PSU-1), this protein is Small ribosomal subunit protein uS17.